A 131-amino-acid chain; its full sequence is Lysosomal enzyme trafficking factor (131 aa).

Helical transmembrane passes span methionine 8 to phenylalanine 28 and leucine 66 to leucine 86.

Belongs to the LYSET family.

The protein localises to the golgi apparatus membrane. Required for mannose-6-phosphate-dependent trafficking of lysosomal enzymes. LYSET bridges GlcNAc-1-phosphate transferase (GNPTAB), to the membrane-bound transcription factor site-1 protease (MBTPS1), thus allowing proteolytic activation of the GNPTAB. GNPTAB is involved in the regulation of M6P-dependent Golgi-to-lysosome trafficking of lysosomal enzymes. LYSET is thus an essential factor for maturation and delivery of lysosomal hydrolases. The sequence is that of Lysosomal enzyme trafficking factor (lyset-b) from Xenopus laevis (African clawed frog).